The primary structure comprises 309 residues: MTTFIPIIFSSLVVVIFVIGNFANGFIALVNSIEWFKRQKISFADQILTALAVSRVGLLWVLLLNWYSTVLNPAFYSVEVRTTAYNVWAVTGHFSNWLATSLSIFYLLKIANFSNLIFLHLKRRVKSVILVMLLGPLLFLACQLFMINMKEIVRTKEYEGNMTWKIKLRSAVYLSDATVTTLGNLVPFTLTLLCFLLLICSLCKHLKKMQLHGKGSQDPSTKVHIKVLQTVISFLLLCAIYFLSIMISVWSFGSLKNKPVFMFCKAMRFSYPSIHPFILIWGNKKLKQTFLSVLRQVRYWVKGEKPSSP.

Over 1–2 (MT) the chain is Extracellular. A helical transmembrane segment spans residues 3–23 (TFIPIIFSSLVVVIFVIGNFA). Residues 24 to 55 (NGFIALVNSIEWFKRQKISFADQILTALAVSR) lie on the Cytoplasmic side of the membrane. A helical transmembrane segment spans residues 56–76 (VGLLWVLLLNWYSTVLNPAFY). Residues 77 to 100 (SVEVRTTAYNVWAVTGHFSNWLAT) lie on the Extracellular side of the membrane. Residues 101-121 (SLSIFYLLKIANFSNLIFLHL) traverse the membrane as a helical segment. The Cytoplasmic segment spans residues 122 to 126 (KRRVK). Residues 127–147 (SVILVMLLGPLLFLACQLFMI) traverse the membrane as a helical segment. Topologically, residues 148 to 181 (NMKEIVRTKEYEGNMTWKIKLRSAVYLSDATVTT) are extracellular. N-linked (GlcNAc...) asparagine glycosylation occurs at Asn161. The chain crosses the membrane as a helical span at residues 182–202 (LGNLVPFTLTLLCFLLLICSL). Residues 203-229 (CKHLKKMQLHGKGSQDPSTKVHIKVLQ) are Cytoplasmic-facing. Residues 230 to 250 (TVISFLLLCAIYFLSIMISVW) form a helical membrane-spanning segment. The Extracellular portion of the chain corresponds to 251 to 259 (SFGSLKNKP). Residues 260 to 280 (VFMFCKAMRFSYPSIHPFILI) form a helical membrane-spanning segment. Residues 281 to 309 (WGNKKLKQTFLSVLRQVRYWVKGEKPSSP) lie on the Cytoplasmic side of the membrane.

Belongs to the G-protein coupled receptor T2R family.

The protein resides in the membrane. Functionally, receptor that may play a role in the perception of bitterness and is gustducin-linked. May play a role in sensing the chemical composition of the gastrointestinal content. The activity of this receptor may stimulate alpha gustducin, mediate PLC-beta-2 activation and lead to the gating of TRPM5. The sequence is that of Taste receptor type 2 member 31 (TAS2R31) from Pan troglodytes (Chimpanzee).